A 274-amino-acid polypeptide reads, in one-letter code: Cytochrome b-c1 complex subunit Rieske, mitochondrial (274 aa).

Residues 79 to 103 (SHTDIKVPDFSDYRRSEVLDTTKSS) lie on the Mitochondrial matrix side of the membrane. Residues 104-140 (RESSDARKGFSYLVTATTAVGVTYAAKSIVTQFVSSM) traverse the membrane as a helical segment. The Mitochondrial intermembrane portion of the chain corresponds to 141-274 (SASADVLAMS…FTSDDLVIVG (134 aa)). Residues 187–272 (EAAVELSQLR…YEFTSDDLVI (86 aa)) enclose the Rieske domain. Residues Cys-217, His-219, Cys-236, His-239, and Ser-241 each coordinate [2Fe-2S] cluster. An intrachain disulfide couples Cys-222 to Cys-238.

This sequence belongs to the Rieske iron-sulfur protein family. As to quaternary structure, component of the ubiquinol-cytochrome c oxidoreductase (cytochrome b-c1 complex, complex III, CIII), a multisubunit enzyme composed of 11 subunits. The complex is composed of 3 respiratory subunits cytochrome b, cytochrome c1 and Rieske protein UQCRFS1, 2 core protein subunits UQCRC1/QCR1 and UQCRC2/QCR2, and 6 low-molecular weight protein subunits UQCRH/QCR6, UQCRB/QCR7, UQCRQ/QCR8, UQCR10/QCR9, UQCR11/QCR10 and subunit 9, the cleavage product of Rieske protein UQCRFS1. The complex exists as an obligatory dimer and forms supercomplexes (SCs) in the inner mitochondrial membrane with NADH-ubiquinone oxidoreductase (complex I, CI) and cytochrome c oxidase (complex IV, CIV), resulting in different assemblies (supercomplex SCI(1)III(2)IV(1) and megacomplex MCI(2)III(2)IV(2)). Incorporation of the Rieske protein UQCRFS1 is the penultimate step in complex III assembly. Interacts with TTC19, which is involved in the clearance of UQCRFS1 fragments. Component of the ubiquinol-cytochrome c oxidoreductase (cytochrome b-c1 complex, complex III, CIII). Subunit 9 corresponds to the mitochondrial targeting sequence (MTS) of Rieske protein UQCRFS1. It is retained after processing and incorporated inside complex III, where it remains bound to the complex and localizes between the 2 core subunits UQCRC1/QCR1 and UQCRC2/QCR2. The cofactor is [2Fe-2S] cluster. Post-translationally, proteolytic processing is necessary for the correct insertion of UQCRFS1 in the complex III dimer. Several fragments are generated during UQCRFS1 insertion, most probably due to the endogenous matrix-processing peptidase (MPP) activity of the 2 core protein subunits UQCRC1/QCR1 and UQCRC2/QCR2, which are homologous to the 2 mitochondrial-processing peptidase (MPP) subunits beta-MPP and alpha-MPP respectively. The action of the protease is also necessary for the clearance of the UQCRFS1 fragments.

It localises to the mitochondrion inner membrane. The enzyme catalyses a quinol + 2 Fe(III)-[cytochrome c](out) = a quinone + 2 Fe(II)-[cytochrome c](out) + 2 H(+)(out). In terms of biological role, component of the ubiquinol-cytochrome c oxidoreductase, a multisubunit transmembrane complex that is part of the mitochondrial electron transport chain which drives oxidative phosphorylation. The respiratory chain contains 3 multisubunit complexes succinate dehydrogenase (complex II, CII), ubiquinol-cytochrome c oxidoreductase (cytochrome b-c1 complex, complex III, CIII) and cytochrome c oxidase (complex IV, CIV), that cooperate to transfer electrons derived from NADH and succinate to molecular oxygen, creating an electrochemical gradient over the inner membrane that drives transmembrane transport and the ATP synthase. The cytochrome b-c1 complex catalyzes electron transfer from ubiquinol to cytochrome c, linking this redox reaction to translocation of protons across the mitochondrial inner membrane, with protons being carried across the membrane as hydrogens on the quinol. In the process called Q cycle, 2 protons are consumed from the matrix, 4 protons are released into the intermembrane space and 2 electrons are passed to cytochrome c. The Rieske protein is a catalytic core subunit containing a [2Fe-2S] iron-sulfur cluster. It cycles between 2 conformational states during catalysis to transfer electrons from the quinol bound in the Q(0) site in cytochrome b to cytochrome c1. Incorporation of UQCRFS1 is the penultimate step in complex III assembly. Functionally, component of the ubiquinol-cytochrome c oxidoreductase (cytochrome b-c1 complex, complex III, CIII). UQCRFS1 undergoes proteolytic processing once it is incorporated in the complex III dimer. One of the fragments, called subunit 9, corresponds to its mitochondrial targeting sequence (MTS). The proteolytic processing is necessary for the correct insertion of UQCRFS1 in the complex III dimer, but the persistence of UQCRFS1-derived fragments may prevent newly imported UQCRFS1 to be processed and assembled into complex III and is detrimental for the complex III structure and function. This Aotus azarae (Azara's night monkey) protein is Cytochrome b-c1 complex subunit Rieske, mitochondrial (UQCRFS1).